Here is an 827-residue protein sequence, read N- to C-terminus: Leucine--tRNA ligase (827 aa).

Positions 42 to 52 match the 'HIGH' region motif; that stretch reads PYPSGKLHMGH. Residues 581–585 carry the 'KMSKS' region motif; the sequence is KMSKS. K584 is an ATP binding site.

This sequence belongs to the class-I aminoacyl-tRNA synthetase family.

Its subcellular location is the cytoplasm. The enzyme catalyses tRNA(Leu) + L-leucine + ATP = L-leucyl-tRNA(Leu) + AMP + diphosphate. This Desulforamulus reducens (strain ATCC BAA-1160 / DSM 100696 / MI-1) (Desulfotomaculum reducens) protein is Leucine--tRNA ligase.